Consider the following 218-residue polypeptide: N-(5'-phosphoribosyl)anthranilate isomerase (218 aa).

Belongs to the TrpF family.

It catalyses the reaction N-(5-phospho-beta-D-ribosyl)anthranilate = 1-(2-carboxyphenylamino)-1-deoxy-D-ribulose 5-phosphate. Its pathway is amino-acid biosynthesis; L-tryptophan biosynthesis; L-tryptophan from chorismate: step 3/5. The sequence is that of N-(5'-phosphoribosyl)anthranilate isomerase from Desulfatibacillum aliphaticivorans.